Reading from the N-terminus, the 237-residue chain is MTPQAFYLALEQAGFALTNHQKEQFDTYFKLLIDWNRKINLTAITEENEVYLKHFYDSVAPLLQGYIPNEPLRLLDIGAGAGFPSIPMKIMFPKLDVTIIDSLNKRIQFLQLLAKELGLEGVHFYHGRAEDFGQDKQFRGQFDLVTARAVARMQILSELTIPFLKIKGKLIALKAQAADQELEEAKKALQLLFAKVLDHQPYQLPNGDARYITLVEKKKETPNKYPRKAGIPNKKPL.

S-adenosyl-L-methionine contacts are provided by residues G78, F83, 129-130, and R148; that span reads AE.

It belongs to the methyltransferase superfamily. RNA methyltransferase RsmG family.

The protein localises to the cytoplasm. Its function is as follows. Specifically methylates the N7 position of a guanine in 16S rRNA. This Streptococcus equi subsp. zooepidemicus (strain H70) protein is Ribosomal RNA small subunit methyltransferase G.